Reading from the N-terminus, the 373-residue chain is Ca(2+)/H(+) antiporter (373 aa).

The next 11 membrane-spanning stretches (helical) occupy residues 6-26 (TIFF…WLHW), 29-49 (VSIF…MGEA), 61-81 (LGGL…AFIA), 94-114 (ITGS…LLGG), 134-154 (MNLA…SNGI), 162-182 (LSVA…LFSM), 220-240 (FWLG…ELLV), 249-269 (SLGL…GNAA), 291-311 (VGST…AGWI), 318-338 (LDFN…ANSI), and 349-369 (GSLL…HPVV).

This sequence belongs to the Ca(2+):cation antiporter (CaCA) (TC 2.A.19) family. Cation/proton exchanger (CAX) subfamily.

The protein localises to the cell inner membrane. Its function is as follows. Ca(+)/H(+) antiporter that extrudes calcium in exchange for external protons. Plays an important role in salt tolerance. Does not transport sodium or lithium. The polypeptide is Ca(2+)/H(+) antiporter (Aphanothece halophytica).